Here is a 236-residue protein sequence, read N- to C-terminus: 2,3,4,5-tetrahydropyridine-2,6-dicarboxylate N-acetyltransferase (236 aa).

This sequence belongs to the transferase hexapeptide repeat family. DapH subfamily.

The enzyme catalyses (S)-2,3,4,5-tetrahydrodipicolinate + acetyl-CoA + H2O = L-2-acetamido-6-oxoheptanedioate + CoA. It functions in the pathway amino-acid biosynthesis; L-lysine biosynthesis via DAP pathway; LL-2,6-diaminopimelate from (S)-tetrahydrodipicolinate (acetylase route): step 1/3. In terms of biological role, catalyzes the transfer of an acetyl group from acetyl-CoA to tetrahydrodipicolinate. This Clostridium botulinum (strain Loch Maree / Type A3) protein is 2,3,4,5-tetrahydropyridine-2,6-dicarboxylate N-acetyltransferase.